The sequence spans 238 residues: Green fluorescent protein (238 aa).

The segment at residues 65–67 (SYG) is a cross-link (5-imidazolinone (Ser-Gly)). (Z)-2,3-didehydrotyrosine is present on tyrosine 66.

The protein belongs to the GFP family. As to quaternary structure, monomer. Contains a chromophore consisting of modified amino acid residues. The chromophore is formed by autocatalytic backbone condensation between Ser-65 and Gly-67, and oxidation of Tyr-66 to didehydrotyrosine. Maturation of the chromophore requires nothing other than molecular oxygen. Photocytes.

Energy-transfer acceptor. Its role is to transduce the blue chemiluminescence of the protein aequorin into green fluorescent light by energy transfer. Fluoresces in vivo upon receiving energy from the Ca(2+)-activated photoprotein aequorin. This chain is Green fluorescent protein (GFP), found in Aequorea victoria (Water jellyfish).